A 336-amino-acid polypeptide reads, in one-letter code: Holliday junction branch migration complex subunit RuvB (336 aa).

The segment at 1–183 (MTEEHLTSQE…FGIVEHMQYY (183 aa)) is large ATPase domain (RuvB-L). ATP-binding positions include leucine 22, arginine 23, glycine 64, lysine 67, threonine 68, threonine 69, 130 to 132 (EDF), arginine 173, tyrosine 183, and arginine 220. Residue threonine 68 coordinates Mg(2+). Positions 184-254 (QVEDLEKIIL…TTAMALKQLQ (71 aa)) are small ATPAse domain (RuvB-S). Residues 257-336 (SAGLDQTDRK…LNLPLPGEEE (80 aa)) are head domain (RuvB-H). Residues arginine 293 and arginine 317 each coordinate DNA.

Belongs to the RuvB family. Homohexamer. Forms an RuvA(8)-RuvB(12)-Holliday junction (HJ) complex. HJ DNA is sandwiched between 2 RuvA tetramers; dsDNA enters through RuvA and exits via RuvB. An RuvB hexamer assembles on each DNA strand where it exits the tetramer. Each RuvB hexamer is contacted by two RuvA subunits (via domain III) on 2 adjacent RuvB subunits; this complex drives branch migration. In the full resolvosome a probable DNA-RuvA(4)-RuvB(12)-RuvC(2) complex forms which resolves the HJ.

It localises to the cytoplasm. The catalysed reaction is ATP + H2O = ADP + phosphate + H(+). Functionally, the RuvA-RuvB-RuvC complex processes Holliday junction (HJ) DNA during genetic recombination and DNA repair, while the RuvA-RuvB complex plays an important role in the rescue of blocked DNA replication forks via replication fork reversal (RFR). RuvA specifically binds to HJ cruciform DNA, conferring on it an open structure. The RuvB hexamer acts as an ATP-dependent pump, pulling dsDNA into and through the RuvAB complex. RuvB forms 2 homohexamers on either side of HJ DNA bound by 1 or 2 RuvA tetramers; 4 subunits per hexamer contact DNA at a time. Coordinated motions by a converter formed by DNA-disengaged RuvB subunits stimulates ATP hydrolysis and nucleotide exchange. Immobilization of the converter enables RuvB to convert the ATP-contained energy into a lever motion, pulling 2 nucleotides of DNA out of the RuvA tetramer per ATP hydrolyzed, thus driving DNA branch migration. The RuvB motors rotate together with the DNA substrate, which together with the progressing nucleotide cycle form the mechanistic basis for DNA recombination by continuous HJ branch migration. Branch migration allows RuvC to scan DNA until it finds its consensus sequence, where it cleaves and resolves cruciform DNA. This Lactobacillus delbrueckii subsp. bulgaricus (strain ATCC 11842 / DSM 20081 / BCRC 10696 / JCM 1002 / NBRC 13953 / NCIMB 11778 / NCTC 12712 / WDCM 00102 / Lb 14) protein is Holliday junction branch migration complex subunit RuvB.